A 416-amino-acid chain; its full sequence is Transmembrane protease serine 11B (416 aa).

At 1-17 (MYRHGISSQRSWPLWTT) the chain is on the cytoplasmic side. A helical; Signal-anchor for type II membrane protein membrane pass occupies residues 18-38 (IFIFLGVAAILGVTIGLLVHF). The Extracellular segment spans residues 39 to 416 (LAVEKTYYYQ…RNWITSKTGL (378 aa)). One can recognise an SEA domain in the interval 43–160 (KTYYYQGDFH…ASIKLMEISK (118 aa)). N-linked (GlcNAc...) asparagine glycosylation is found at Asn72 and Asn107. Positions 185-415 (IVNGKSSLEG…YRNWITSKTG (231 aa)) constitute a Peptidase S1 domain. Cys210 and Cys226 are joined by a disulfide. Catalysis depends on charge relay system residues His225 and Asp270. N-linked (GlcNAc...) asparagine glycosylation occurs at Asn315. 2 cysteine pairs are disulfide-bonded: Cys335/Cys351 and Cys362/Cys391. Ser366 serves as the catalytic Charge relay system.

The protein belongs to the peptidase S1 family.

The protein localises to the cell membrane. Inhibited by aprotinin, leupeptin, benzamidine, SERPINA1, SPINT1 and SPINT2. In terms of biological role, serine protease. The polypeptide is Transmembrane protease serine 11B (TMPRSS11B) (Homo sapiens (Human)).